Consider the following 612-residue polypeptide: Poly(A) RNA polymerase, mitochondrial (612 aa).

Residues 1–57 constitute a mitochondrion transit peptide; it reads MNSLVRRSAQQLSLWRTYCIKHNASEAASPGRNAGRPNYEEFIGRHQRQAQCSIVVQ. Residues 83–89 and 228–229 contribute to the ATP site; these read YCVRQDE and GC. The Mg(2+) site is built by D230 and D232. The region spanning 427–463 is the PAP-associated domain; that stretch reads SLSELLLQFFEFYSQFDFHNRAISLNEGKPLSKPDHS. Disordered stretches follow at residues 555–574 and 588–612; these read AGAT…KSAS and SELK…RRSR.

This sequence belongs to the DNA polymerase type-B-like family. Mg(2+) serves as cofactor. Mn(2+) is required as a cofactor.

It localises to the mitochondrion. The enzyme catalyses RNA(n) + ATP = RNA(n)-3'-adenine ribonucleotide + diphosphate. Functionally, polymerase that creates the 3' poly(A) tail of mitochondrial transcripts. This is not required for transcript stability or translation but may maintain mRNA integrity by protecting 3' termini from degradation. In Drosophila melanogaster (Fruit fly), this protein is Poly(A) RNA polymerase, mitochondrial.